Reading from the N-terminus, the 776-residue chain is Endonuclease MutS2 (776 aa).

Residue G330–T337 coordinates ATP. Residues L701–K776 form the Smr domain.

The protein belongs to the DNA mismatch repair MutS family. MutS2 subfamily. As to quaternary structure, homodimer. Binds to stalled ribosomes, contacting rRNA.

Functionally, endonuclease that is involved in the suppression of homologous recombination and thus may have a key role in the control of bacterial genetic diversity. Acts as a ribosome collision sensor, splitting the ribosome into its 2 subunits. Detects stalled/collided 70S ribosomes which it binds and splits by an ATP-hydrolysis driven conformational change. Acts upstream of the ribosome quality control system (RQC), a ribosome-associated complex that mediates the extraction of incompletely synthesized nascent chains from stalled ribosomes and their subsequent degradation. Probably generates substrates for RQC. This Lactococcus lactis subsp. cremoris (strain SK11) protein is Endonuclease MutS2.